The primary structure comprises 504 residues: ATP synthase subunit alpha (504 aa).

169–176 (GDRQTGKT) contacts ATP.

Belongs to the ATPase alpha/beta chains family. As to quaternary structure, F-type ATPases have 2 components, CF(1) - the catalytic core - and CF(0) - the membrane proton channel. CF(1) has five subunits: alpha(3), beta(3), gamma(1), delta(1), epsilon(1). CF(0) has three main subunits: a(1), b(2) and c(9-12). The alpha and beta chains form an alternating ring which encloses part of the gamma chain. CF(1) is attached to CF(0) by a central stalk formed by the gamma and epsilon chains, while a peripheral stalk is formed by the delta and b chains.

It localises to the cell membrane. The catalysed reaction is ATP + H2O + 4 H(+)(in) = ADP + phosphate + 5 H(+)(out). Functionally, produces ATP from ADP in the presence of a proton gradient across the membrane. The alpha chain is a regulatory subunit. This Clostridium kluyveri (strain NBRC 12016) protein is ATP synthase subunit alpha.